The primary structure comprises 514 residues: Nucleus accumbens-associated protein 1 (514 aa).

Residues Cys-30 to Met-94 enclose the BTB domain. Lys-167 participates in a covalent cross-link: Glycyl lysine isopeptide (Lys-Gly) (interchain with G-Cter in SUMO1); alternate. Lys-167 participates in a covalent cross-link: Glycyl lysine isopeptide (Lys-Gly) (interchain with G-Cter in SUMO2); alternate. Lys-182 participates in a covalent cross-link: Glycyl lysine isopeptide (Lys-Gly) (interchain with G-Cter in SUMO2). 2 disordered regions span residues Arg-183–Pro-218 and Gly-241–Thr-279. The residue at position 187 (Ser-187) is a Phosphoserine. The segment covering Pro-242 to Gly-251 has biased composition (polar residues). Ser-245 bears the Phosphoserine; by PKC mark. Residues Thr-252–Tyr-264 show a composition bias toward low complexity. Residues Glu-267–Thr-279 show a composition bias toward acidic residues. Glycyl lysine isopeptide (Lys-Gly) (interchain with G-Cter in SUMO2) cross-links involve residues Lys-304, Lys-438, Lys-466, and Lys-485. One can recognise a BEN domain in the interval Gly-360–Val-457. A phosphoserine mark is found at Ser-492 and Ser-496.

In terms of assembly, homooligomer; mediated by the BTB domain. Both isoforms interact with HDAC3 and HDAC4. Interacts (via BTB domain) with CUL3, PSMD7 and RCOR1. Post-translationally, phosphorylated by protein kinase C (PKC). Highly expressed in the hippocampus, brain cortex, cerebellum and brainstem. Expressed in the nucleus accumbens, olfactory tubercle, the striatum, frontal and parietal cortex and ventral pallidum. Weakly expressed in the heart, liver, kidney, spleen, testis, and skeletal muscle. Isoform 2 is expressed in the brain and liver, less abundantly expressed in the brain than isoform 1.

The protein resides in the nucleus. It localises to the cytoplasm. In terms of biological role, functions as a transcriptional repressor. Isoform 1 is a stronger transcriptional repressor than isoform 2. Seems to function as a transcriptional corepressor in neuronal cells through recruitment of HDAC3 and HDAC4. Contributes to tumor progression, and tumor cell proliferation and survival. This may be mediated at least in part through repressing transcriptional activity of GADD45GIP1. Required for recruiting the proteasome from the nucleus to the cytoplasm and dendritic spines. In Rattus norvegicus (Rat), this protein is Nucleus accumbens-associated protein 1 (Nacc1).